A 24-amino-acid polypeptide reads, in one-letter code: RuBisCO large subunit-binding protein subunit beta, chloroplastic (24 aa).

Belongs to the chaperonin (HSP60) family. Oligomer of probably six alpha and six beta subunits.

The protein resides in the plastid. The protein localises to the chloroplast. Functionally, this protein binds RuBisCO small and large subunits and is implicated in the assembly of the enzyme oligomer. This Populus euphratica (Euphrates poplar) protein is RuBisCO large subunit-binding protein subunit beta, chloroplastic.